The primary structure comprises 286 residues: Probable aquaporin PIP2-5 (286 aa).

Met1 is modified (N-acetylmethionine). Residues 1-18 show a composition bias toward basic and acidic residues; sequence MTKEVVGDKRSFSGKDYQ. The interval 1–23 is disordered; it reads MTKEVVGDKRSFSGKDYQDPPPE. The Cytoplasmic portion of the chain corresponds to 1–38; sequence MTKEVVGDKRSFSGKDYQDPPPEPLFDATELGKWSFYR. An N6,N6-dimethyllysine modification is found at Lys3. A helical transmembrane segment spans residues 39 to 59; the sequence is ALIAEFIATLLFLYVTIMTVI. The Extracellular portion of the chain corresponds to 60 to 75; the sequence is GYKSQTDPALNPDQCT. Residues 76–96 traverse the membrane as a helical segment; that stretch reads GVGVLGIAWAFGGMIFILVYC. The Cytoplasmic segment spans residues 97-124; sequence TAGISGGHINPAVTFGLLLARKVTLVRA. The short motif at 106-108 is the NPA 1 element; that stretch reads NPA. The chain crosses the membrane as a helical span at residues 125–145; the sequence is VMYMVAQCLGAICGVALVKAF. Topologically, residues 146 to 165 are extracellular; it reads QSAYFTRYGGGANGLSDGYS. A helical membrane pass occupies residues 166-186; the sequence is IGTGVAAEIIGTFVLVYTVFS. Topologically, residues 187 to 200 are cytoplasmic; sequence ATDPKRSARDSHVP. The chain crosses the membrane as a helical span at residues 201-221; that stretch reads VLAPLPIGFAVFIVHLATIPI. At 222-248 the chain is on the extracellular side; the sequence is TGTGINPARSLGAAIIYNKDKAWDHHW. Residues 227 to 229 carry the NPA 2 motif; that stretch reads NPA. Residues 249–269 form a helical membrane-spanning segment; it reads IFWVGPFAGAAIAAFYHQFVL. Residues 270-286 are Cytoplasmic-facing; sequence RAGAIKALGSFRSQPHV. Ser279 and Ser282 each carry phosphoserine.

This sequence belongs to the MIP/aquaporin (TC 1.A.8) family. PIP (TC 1.A.8.11) subfamily. As to expression, expressed in green siliques.

It is found in the cell membrane. Functionally, aquaporins facilitate the transport of water and small neutral solutes across cell membranes. In Arabidopsis thaliana (Mouse-ear cress), this protein is Probable aquaporin PIP2-5 (PIP2-5).